The sequence spans 227 residues: Sperm-associated antigen 7 (227 aa).

The tract at residues 1-45 is disordered; that stretch reads MADLLGSILSSMEKPPSLGDQESRRKAREQAARLKKLQEQDKQQK. N-acetylalanine is present on Ala-2. Positions 21-45 are enriched in basic and acidic residues; it reads QESRRKAREQAARLKKLQEQDKQQK. The Nuclear localization signal motif lies at 35-51; sequence KKLQEQDKQQKVEFRKR. The region spanning 46 to 109 is the R3H domain; the sequence is VEFRKRMEKE…DCRYVMIFKK (64 aa). Ser-114 is subject to Phosphoserine. The segment at 118–161 is disordered; it reads LDSYRHGEEWDPQKAEEKRKLKELAQKQEEEAAQQGPAVVSPAS. Residues 119–147 are compositionally biased toward basic and acidic residues; sequence DSYRHGEEWDPQKAEEKRKLKELAQKQEE. The Nuclear localization signal signature appears at 122 to 139; the sequence is RHGEEWDPQKAEEKRKLK. Phosphoserine is present on residues Ser-158 and Ser-202.

It is found in the nucleus. The sequence is that of Sperm-associated antigen 7 (Spag7) from Mus musculus (Mouse).